The following is a 156-amino-acid chain: Ribosomal RNA large subunit methyltransferase H (156 aa).

S-adenosyl-L-methionine is bound by residues L73, G104, and 123 to 128 (IGPLTL).

Belongs to the RNA methyltransferase RlmH family. In terms of assembly, homodimer.

It is found in the cytoplasm. The enzyme catalyses pseudouridine(1915) in 23S rRNA + S-adenosyl-L-methionine = N(3)-methylpseudouridine(1915) in 23S rRNA + S-adenosyl-L-homocysteine + H(+). Its function is as follows. Specifically methylates the pseudouridine at position 1915 (m3Psi1915) in 23S rRNA. The protein is Ribosomal RNA large subunit methyltransferase H of Stenotrophomonas maltophilia (strain R551-3).